The primary structure comprises 109 residues: ATPase inhibitor, mitochondrial (109 aa).

The transit peptide at 1–22 (MAGSSSLLRAGIRNVLLMQMRR) directs the protein to the mitochondrion. The interval 27-56 (LGELGKGAGKGGGGGGSVREAGGAFGKRQA) is N-terminal inhibitory region. Residues 27-109 (LGELGKGAGK…KSKIKKLNDD (83 aa)) form a disordered region. Gly residues predominate over residues 30–43 (LGKGAGKGGGGGGS). Basic and acidic residues-rich tracts occupy residues 55–69 (QAAE…KEQE) and 77–98 (HHEE…EIER). A coiled-coil region spans residues 71 to 109 (IASLRKHHEEEIRHHKGEIERLQKEIERHKSKIKKLNDD). Positions 78 to 109 (HEEEIRHHKGEIERLQKEIERHKSKIKKLNDD) are antiparallel alpha-helical coiled coil region. The segment covering 99 to 109 (HKSKIKKLNDD) has biased composition (basic residues).

The protein belongs to the ATPase inhibitor family. Homodimer; represents the active form and is present at a pH value below 6.5. Homotetramer; represents the inactive form and is present at a pH value above 7.0.

The protein localises to the mitochondrion. Functionally, endogenous F(1)F(o)-ATPase inhibitor limiting ATP depletion when the mitochondrial membrane potential falls below a threshold and the F(1)F(o)-ATP synthase starts hydrolyzing ATP to pump protons out of the mitochondrial matrix. Required to avoid the consumption of cellular ATP when the F(1)F(o)-ATP synthase enzyme acts as an ATP hydrolase. Indirectly acts as a regulator of heme synthesis in erythroid tissues: regulates heme synthesis by modulating the mitochondrial pH and redox potential, allowing fech to efficiently catalyze the incorporation of iron into protoporphyrin IX to produce heme. This Xenopus tropicalis (Western clawed frog) protein is ATPase inhibitor, mitochondrial.